Reading from the N-terminus, the 351-residue chain is Putative [LysW]-L-2-aminoadipate/[LysW]-L-glutamate phosphate reductase (351 aa).

NADP(+) is bound by residues 9–12 and 33–35; these read SGFV and SRR. Cys-150 is a catalytic residue. An NADP(+)-binding site is contributed by Asn-318.

This sequence belongs to the NAGSA dehydrogenase family. Type 1 subfamily. LysY sub-subfamily.

It is found in the cytoplasm. The enzyme catalyses [amino-group carrier protein]-C-terminal-N-(1-carboxy-5-oxopentan-1-yl)-L-glutamine + phosphate + NADP(+) = [amino-group carrier protein]-C-terminal-N-(1-carboxy-5-phosphooxy-5-oxopentan-1-yl)-L-glutamine + NADPH + H(+). The catalysed reaction is [amino-group carrier protein]-C-terminal-gamma-(L-glutamyl-5-semialdehyde)-L-glutamate + phosphate + NADP(+) = [amino-group carrier protein]-C-terminal-gamma-(5-phospho-L-glutamyl)-L-glutamate + NADPH + H(+). The protein operates within amino-acid biosynthesis; L-lysine biosynthesis via AAA pathway; L-lysine from L-alpha-aminoadipate (Thermus route): step 3/5. It participates in amino-acid biosynthesis; L-arginine biosynthesis. Its function is as follows. Involved in both the arginine and lysine biosynthetic pathways. The chain is Putative [LysW]-L-2-aminoadipate/[LysW]-L-glutamate phosphate reductase from Pyrobaculum aerophilum (strain ATCC 51768 / DSM 7523 / JCM 9630 / CIP 104966 / NBRC 100827 / IM2).